Consider the following 658-residue polypeptide: DNA-binding protein Rfx5 (658 aa).

The segment covering Met-1 to Ser-10 has biased composition (basic and acidic residues). A disordered region spans residues Met-1–Thr-28. Position 2 is an N-acetylalanine (Ala-2). At Ser-10 the chain carries Phosphoserine. Positions Gly-24 to Met-89 are N-terminal domain. The segment at Leu-61–Leu-65 is leucine-rich region; critical for dimer formation and for interaction with RFXAP. Residues Ala-91–Thr-167 constitute a DNA-binding region (RFX-type winged-helix). The short motif at Pro-172–Leu-177 is the PxLPxI/L motif; mediates interaction with RFXANK element. At Ser-184 the chain carries Phosphoserine. Disordered regions lie at residues Leu-250–Pro-315, Ala-382–Ala-422, Val-443–Pro-602, and Lys-624–Pro-658. A compositionally biased stretch (basic and acidic residues) spans Gly-277 to Val-309. Composition is skewed to gly residues over residues Ala-382–Pro-398 and Pro-406–Ala-422. Composition is skewed to basic and acidic residues over residues Pro-465–Ala-476 and Pro-489–Gln-498. Residues Lys-506–Pro-516 show a composition bias toward basic residues. Over residues Pro-648–Pro-658 the composition is skewed to basic and acidic residues.

It belongs to the RFX family. Homodimer. The RFX heterotetrameric complex consists of 2 molecules of RFX5 and one each of RFXAP and RFX-B/RFXANK; with each subunit representing a separate complementation group. Interacts (via PxLPxI/L motif) with RFXANK (via ankyrin repeats); the interaction is direct. RFX forms cooperative DNA binding complexes with X2BP and CBF/NF-Y. RFX associates with CIITA to form an active transcriptional complex. In terms of processing, phosphorylated.

Its subcellular location is the nucleus. Functionally, activates transcription from class II MHC promoters. Recognizes X-boxes. Mediates cooperative binding between RFX and NF-Y. RFX binds the X1 box of MHC-II promoters. This chain is DNA-binding protein Rfx5 (Rfx5), found in Mus musculus (Mouse).